The primary structure comprises 458 residues: Transcription termination factor Rho (458 aa).

The segment at 1 to 23 (MNTTNKESTAELNNTESNNNYNN) is disordered. Residues 10–23 (AELNNTESNNNYNN) are compositionally biased toward low complexity. The Rho RNA-BD domain maps to 78 to 153 (LIVGEGVLEV…LKVNRVNFED (76 aa)). ATP-binding positions include 201–206 (GKGQRA), 213–218 (RTGKTV), and Arg244.

Belongs to the Rho family. Homohexamer. The homohexamer assembles into an open ring structure.

Facilitates transcription termination by a mechanism that involves Rho binding to the nascent RNA, activation of Rho's RNA-dependent ATPase activity, and release of the mRNA from the DNA template. This is Transcription termination factor Rho from Rickettsia conorii (strain ATCC VR-613 / Malish 7).